The sequence spans 111 residues: uncharacterized protein (111 aa).

The next 2 helical transmembrane spans lie at 29-49 and 52-72; these read LLNFFIFFSLHLCALFLATAV and ACFACFVLFRHAILLLFYLLA.

The protein resides in the membrane. This is an uncharacterized protein from Saccharomyces cerevisiae (strain ATCC 204508 / S288c) (Baker's yeast).